Reading from the N-terminus, the 551-residue chain is MSKVGSSLYSRLHGIFKESSIATAKSAKPRSQTKSTKFPSKLKASTASVGDGGQSSNDAKDSKNSKLTQKVEKFKRSCESESFRQVHGLYSAFIRRLREAKKFSTIDEVLQYQKKFDDIKSEDFVIRIMLLYGYSGMAEHAHKLFDEMPELNCERTVKSFNALLSAYVNSKKLDEAMKTFKELPEKLGITPDLVTYNTMIKALCRKGSMDDILSIFEELEKNGFEPDLISFNTLLEEFYRRELFVEGDRIWDLMKSKNLSPNIRSYNSRVRGLTRNKKFTDALNLIDVMKTEGISPDVHTYNALITAYRVDNNLEEVMKCYNEMKEKGLTPDTVTYCMLIPLLCKKGDLDRAVEVSEEAIKHKLLSRPNMYKPVVERLMGAGKIDEATQLVKNGKLQSYFRYLPDLSAGKKKTTSSPVSSSAKTTSTPVSSSPDTSSFLLSLSLAADSSSSDSDSSSPDSSSSVSSSPDSSSSVSSSPDSYSSFSSSPDSSSSVSSSLFSSSRENSSSPDYSNSVSSSLDYSGSVSSSSDYSSSVFPSANSSSSSSGLLDD.

Residues 22–67 are disordered; it reads ATAKSAKPRSQTKSTKFPSKLKASTASVGDGGQSSNDAKDSKNSKL. Positions 29–48 are enriched in polar residues; it reads PRSQTKSTKFPSKLKASTAS. Basic and acidic residues predominate over residues 58-67; that stretch reads DAKDSKNSKL. PPR repeat units follow at residues 121–155, 156–191, 192–226, 227–261, 262–296, 297–331, and 332–366; these read SEDF…NCER, TVKS…GITP, DLVT…GFEP, DLIS…NLSP, NIRS…GISP, DVHT…GLTP, and DTVT…KLLS. 2 disordered regions span residues 409–435 and 449–551; these read GKKK…SPDT and SSSD…LLDD. A compositionally biased stretch (low complexity) spans 415–435; it reads SSPVSSSAKTTSTPVSSSPDT.

This sequence belongs to the PPR family. P subfamily.

In Arabidopsis thaliana (Mouse-ear cress), this protein is Pentatricopeptide repeat-containing protein At3g13150.